A 364-amino-acid chain; its full sequence is Phosphoserine aminotransferase (364 aa).

Position 46 (Arg46) interacts with L-glutamate. Residues 80–81 (AR), Trp106, Thr157, Asp176, and Gln199 contribute to the pyridoxal 5'-phosphate site. At Lys200 the chain carries N6-(pyridoxal phosphate)lysine. 241–242 (NT) is a binding site for pyridoxal 5'-phosphate.

The protein belongs to the class-V pyridoxal-phosphate-dependent aminotransferase family. SerC subfamily. In terms of assembly, homodimer. Requires pyridoxal 5'-phosphate as cofactor.

It localises to the cytoplasm. It carries out the reaction O-phospho-L-serine + 2-oxoglutarate = 3-phosphooxypyruvate + L-glutamate. It catalyses the reaction 4-(phosphooxy)-L-threonine + 2-oxoglutarate = (R)-3-hydroxy-2-oxo-4-phosphooxybutanoate + L-glutamate. Its pathway is amino-acid biosynthesis; L-serine biosynthesis; L-serine from 3-phospho-D-glycerate: step 2/3. It functions in the pathway cofactor biosynthesis; pyridoxine 5'-phosphate biosynthesis; pyridoxine 5'-phosphate from D-erythrose 4-phosphate: step 3/5. Its function is as follows. Catalyzes the reversible conversion of 3-phosphohydroxypyruvate to phosphoserine and of 3-hydroxy-2-oxo-4-phosphonooxybutanoate to phosphohydroxythreonine. The polypeptide is Phosphoserine aminotransferase (Vibrio vulnificus (strain CMCP6)).